Consider the following 298-residue polypeptide: Bifunctional methyltransferase/endonuclease (298 aa).

Residues 1 to 79 (MQSIDLYSYL…SLGIDEKIRR (79 aa)) form a probable methylated-DNA--protein-cysteine methyltransferase region. Cys56 is a catalytic residue. The segment at 80–298 (LRNDGIEINN…TVALRRNNII (219 aa)) is endonuclease V. Positions 137 and 197 each coordinate Mg(2+).

It in the N-terminal section; belongs to the MGMT family. This sequence in the C-terminal section; belongs to the endonuclease V family. Requires Mg(2+) as cofactor.

It localises to the cytoplasm. It carries out the reaction Endonucleolytic cleavage at apurinic or apyrimidinic sites to products with a 5'-phosphate.. In terms of biological role, DNA repair enzyme involved in the repair of deaminated bases. Selectively cleaves double-stranded DNA at the second phosphodiester bond 3' to a deoxyinosine leaving behind the intact lesion on the nicked DNA. In Picrophilus torridus (strain ATCC 700027 / DSM 9790 / JCM 10055 / NBRC 100828 / KAW 2/3), this protein is Bifunctional methyltransferase/endonuclease.